Reading from the N-terminus, the 519-residue chain is bZIP transcription factor 30 (519 aa).

Disordered stretches follow at residues 1–30 (MGGG…IPKH), 45–83 (FRHP…QPSS), 108–202 (TGAG…RKPE), 222–295 (VLNS…TGRH), and 315–339 (SSLK…NSSA). Residues 51–61 (GAPPPPIPPIS) show a composition bias toward pro residues. The span at 149-173 (SDVTFGFSSMMSQNQKSPPLSSLER) shows a compositional bias: polar residues. A compositionally biased stretch (basic and acidic residues) spans 187–202 (VKKEPREGFYKGRKPE). Low complexity-rich tracts occupy residues 244-268 (SRGS…SASG) and 317-329 (LKLP…KVSP). Residues 330–339 (TNSGEGNSSA) show a composition bias toward polar residues. The basic motif stretch occupies residues 372–393 (KRVKRILANRVSAARSKERKTR). The stretch at 386–460 (RSKERKTRYM…SEKLNEEVQR (75 aa)) forms a coiled coil. The segment at 398 to 433 (LEHKVQTLQTEATTLSAQLTHLQRDSMGLTNQNSEL) is leucine-zipper. The tract at residues 465 to 519 (IGEPNRRQSGSSSSESKMSLNPEMFQQLSISQLQHQQMQHSNQCSTMKAKHTSND) is disordered. Composition is skewed to low complexity over residues 473–483 (SGSSSSESKMS) and 490–509 (QQLS…NQCS).

In terms of assembly, interacts with WUS, HEC1, KNAT1, KNAT2, HAT1, BEL1, and NGA1. Expressed in inflorescence meristem, floral organ primordia, gynoecia, ovules and carpel margin meristem.

Its subcellular location is the nucleus. Its function is as follows. Transcription factor that acts as a repressor of reproductive development, meristem size and plant growth. Acts as a transcriptional repressor in inflorescence tissues. Interacts with well known regulators of meristem and gynoecium development such as WUS, HEC1, KNAT1, KNAT2, HAT1, BEL1 and NGA1. Acts as a positive regulator of JAG and OFP1 expression in developing gynoecia. The chain is bZIP transcription factor 30 from Arabidopsis thaliana (Mouse-ear cress).